Consider the following 359-residue polypeptide: Molybdenum import ATP-binding protein ModC (359 aa).

An ABC transporter domain is found at 1 to 233 (MSGLTVSIRG…IDAESEGGGV (233 aa)). 32-39 (GHSGAGKT) lines the ATP pocket. Residues 289–355 (AISIRNLLPV…VKAVSVDRAA (67 aa)) form the Mop domain.

Belongs to the ABC transporter superfamily. Molybdate importer (TC 3.A.1.8) family. The complex is composed of two ATP-binding proteins (ModC), two transmembrane proteins (ModB) and a solute-binding protein (ModA).

Its subcellular location is the cell inner membrane. It catalyses the reaction molybdate(out) + ATP + H2O = molybdate(in) + ADP + phosphate + H(+). Part of the ABC transporter complex ModABC involved in molybdenum import. Responsible for energy coupling to the transport system. This chain is Molybdenum import ATP-binding protein ModC, found in Brucella suis biovar 1 (strain 1330).